A 384-amino-acid polypeptide reads, in one-letter code: Guanine nucleotide-binding protein alpha-2 subunit (384 aa).

Positions M1–A23 are disordered. A lipid anchor (N-myristoyl glycine) is attached at G2. A lipid anchor (S-palmitoyl cysteine) is attached at C5. Positions H38–L384 constitute a G-alpha domain. The G1 motif stretch occupies residues K41–T54. GTP contacts are provided by E49, S50, G51, K52, S53, T54, D163, L188, Y189, T194, G222, N288, K289, D291, and A356. Position 53 (S53) interacts with Mg(2+). A G2 motif region spans residues D186 to T194. Residue T194 coordinates Mg(2+). Residues Y215 to R224 form a G3 motif region. A G4 motif region spans residues M284–D291. The tract at residues T354–Q359 is G5 motif.

The protein belongs to the G-alpha family. As to quaternary structure, g proteins are composed of 3 units; alpha, beta and gamma. The alpha chain contains the guanine nucleotide binding site. Mg(2+) serves as cofactor.

Its function is as follows. Guanine nucleotide-binding proteins (G proteins) are involved as modulators or transducers in various transmembrane signaling systems. The chain is Guanine nucleotide-binding protein alpha-2 subunit (GPA2) from Pisum sativum (Garden pea).